The following is a 1426-amino-acid chain: MPKTRKYSTVDEEKILKVSLSLATKEDVLEWSHGEVTKPETINYKSYKPERHGLFDELIFGPATDYKCPICGKKYKKSNEGLTCNNTPQCEIEKPEILPKISRRSRMGHIALQTPVVHFWFFKIDNSIISKLLVLRVGESNEYVSKNDLENIIYYKSHIVLDNGGLKSLPKNKIININNAAQIYKDALIELRELNLNDADALEIIDGTINHLNDIVGSKVGNDYGVDFYELNEVIEEYSSAKIQTGSKAIEFLLENIDLEEEQRKIKSKIKEINNLEKTSSSRKQDLSKLYKRLQVVESFINSGQKPTSMLIYNLPVIPAELRPLVQLDGGRHSTSDINELYRRIIIRNNRLRKWIELNAPTLITQNELRMIQEAVDALIDNSKKKPKPVTSKDNRNLKSISDALTGKKGRFRQNLLGKRVDYSGRSVIVVGPELKMNQVGIPREMAAKLFEPWIIKELIDQEITLSVKSARKLIDNLNPIIWPHVAKVIQGRPVLLNRAPTLHRLSIQAFEPVLIRGKAIKLHPLVTTAFNADFDGDQMAVHVPISDEAVREAKELLFANRNILGPKDGEPIINPSQDMILGIYYLTIEIAGAKGEAKVFQDVNSMLRAYEEGSVSLHARVAIPFKKLQKTFNLKGDKGYIFSTVGKFIFNQAFPENFPFIFDSSVSSISDAQEYTKKYYIPYGLNIKETIQNTPINDALSKKDLSKIIRTIFDKYVPVLTKEDVASVINDVNHTNYKDTSTKFANLVTTNKTALEYIHAESLSKFTTKHFVDVNKKLSLKTPGNPNQPIWEVDQYVELLENVWFDYVNIVASVLDEIKDLGFKFSTKSGTSISIHDIEVSDNKKERIKEGDDYTSELKSMYREGLLTDDERYSLTINKWSEVKDNIQNDLKKIVKNNPLNPIFIMMNSGARSNMANYVQLAGIRGLMTNNTKILKSDAENERVVRSTVEIPVKSSFLDGLTAYEFYSSTHGARKGLTDTALNTAKSGYLTRRLVDVAQGIVVTEKDCATQNGFVVKDIVDNKTKTVIVPIRERIEGRFTIEDVKDKDGNVIVEKDTLIDAKMAEEIVEVHDVKEVNIRSILGCEAKNGVCQKCFGKDLATSRIVSIGEAVGITASQSIGEPGTQLTMRTFHSGGVAGVEDITGGFGRLTELIDAYRSPWGRPAIISKVDGIITEIKTPKDKNTNLVYITYLDQDDASQTEVVSVPKNRTLRVKVGDKIVKGQKIIDGPIILEELLEYGGPRKVQSYLLKEIQKIYRMQGIAINDKYIEIIISQMLSKIEISEPGDSDFIIGSLVNNLDFYNTNNELLEKGLEPAKGKVVIHGAKRIPLLSNSFLAAASYQESAKILVNSSISSQQDFLVGVKENIILGKKIPAGTNSQYESKSKFDIRDPKEYFKDKSPQRHYKIEMDNEVSDMFNEFRISQNK.

Positions 534, 536, and 538 each coordinate Mg(2+). 4 residues coordinate Zn(2+): cysteine 1009, cysteine 1085, cysteine 1092, and cysteine 1095.

The protein belongs to the RNA polymerase beta' chain family. The RNAP catalytic core consists of 2 alpha, 1 beta, 1 beta' and 1 omega subunit. When a sigma factor is associated with the core the holoenzyme is formed, which can initiate transcription. The cofactor is Mg(2+). Requires Zn(2+) as cofactor.

The catalysed reaction is RNA(n) + a ribonucleoside 5'-triphosphate = RNA(n+1) + diphosphate. DNA-dependent RNA polymerase catalyzes the transcription of DNA into RNA using the four ribonucleoside triphosphates as substrates. The polypeptide is DNA-directed RNA polymerase subunit beta' (Mycoplasmopsis pulmonis (strain UAB CTIP) (Mycoplasma pulmonis)).